Consider the following 378-residue polypeptide: Spermidine/putrescine import ATP-binding protein PotA (378 aa).

Residues 18-248 (VLLSGISKSF…PKNLFVAGFI (231 aa)) enclose the ABC transporter domain. ATP is bound at residue 50–57 (GPSGCGKT).

This sequence belongs to the ABC transporter superfamily. Spermidine/putrescine importer (TC 3.A.1.11.1) family. As to quaternary structure, the complex is composed of two ATP-binding proteins (PotA), two transmembrane proteins (PotB and PotC) and a solute-binding protein (PotD).

It localises to the cell inner membrane. The catalysed reaction is ATP + H2O + polyamine-[polyamine-binding protein]Side 1 = ADP + phosphate + polyamineSide 2 + [polyamine-binding protein]Side 1.. Functionally, part of the ABC transporter complex PotABCD involved in spermidine/putrescine import. Responsible for energy coupling to the transport system. The polypeptide is Spermidine/putrescine import ATP-binding protein PotA (Salmonella typhi).